Consider the following 430-residue polypeptide: Serine--tRNA ligase (430 aa).

231–233 (TSE) is an L-serine binding site. Residue 262-264 (RSE) participates in ATP binding. Residue glutamate 285 coordinates L-serine. 349–352 (EISS) is an ATP binding site. Serine 385 contributes to the L-serine binding site.

Belongs to the class-II aminoacyl-tRNA synthetase family. Type-1 seryl-tRNA synthetase subfamily. Homodimer. The tRNA molecule binds across the dimer.

The protein resides in the cytoplasm. The enzyme catalyses tRNA(Ser) + L-serine + ATP = L-seryl-tRNA(Ser) + AMP + diphosphate + H(+). The catalysed reaction is tRNA(Sec) + L-serine + ATP = L-seryl-tRNA(Sec) + AMP + diphosphate + H(+). The protein operates within aminoacyl-tRNA biosynthesis; selenocysteinyl-tRNA(Sec) biosynthesis; L-seryl-tRNA(Sec) from L-serine and tRNA(Sec): step 1/1. In terms of biological role, catalyzes the attachment of serine to tRNA(Ser). Is also able to aminoacylate tRNA(Sec) with serine, to form the misacylated tRNA L-seryl-tRNA(Sec), which will be further converted into selenocysteinyl-tRNA(Sec). The sequence is that of Serine--tRNA ligase from Jannaschia sp. (strain CCS1).